Consider the following 338-residue polypeptide: 1-aminocyclopropane-1-carboxylate deaminase (338 aa).

Lys-51 bears the N6-(pyridoxal phosphate)lysine mark. Catalysis depends on Ser-78, which acts as the Nucleophile.

This sequence belongs to the ACC deaminase/D-cysteine desulfhydrase family. As to quaternary structure, homotrimer. The cofactor is pyridoxal 5'-phosphate.

The catalysed reaction is 1-aminocyclopropane-1-carboxylate + H2O = 2-oxobutanoate + NH4(+). In terms of biological role, catalyzes a cyclopropane ring-opening reaction, the irreversible conversion of 1-aminocyclopropane-1-carboxylate (ACC) to ammonia and alpha-ketobutyrate. Allows growth on ACC as a nitrogen source. This Pseudomonas syringae pv. tomato (strain ATCC BAA-871 / DC3000) protein is 1-aminocyclopropane-1-carboxylate deaminase.